The primary structure comprises 473 residues: Siroheme synthase (473 aa).

The interval 1 to 203 (MNYLPIFIDL…GNKEQAINVL (203 aa)) is precorrin-2 dehydrogenase /sirohydrochlorin ferrochelatase. NAD(+)-binding positions include 22-23 (EV) and 43-44 (KE). At Ser128 the chain carries Phosphoserine. The segment at 215-473 (GEIILVGAGP…KNKFSTLTFI (259 aa)) is uroporphyrinogen-III C-methyltransferase. Residue Pro224 participates in S-adenosyl-L-methionine binding. Asp247 serves as the catalytic Proton acceptor. Lys269 serves as the catalytic Proton donor. S-adenosyl-L-methionine is bound by residues 300 to 302 (GGD), Ile305, Met382, and Gly411.

This sequence in the N-terminal section; belongs to the precorrin-2 dehydrogenase / sirohydrochlorin ferrochelatase family. In the C-terminal section; belongs to the precorrin methyltransferase family.

It catalyses the reaction uroporphyrinogen III + 2 S-adenosyl-L-methionine = precorrin-2 + 2 S-adenosyl-L-homocysteine + H(+). The enzyme catalyses precorrin-2 + NAD(+) = sirohydrochlorin + NADH + 2 H(+). It carries out the reaction siroheme + 2 H(+) = sirohydrochlorin + Fe(2+). Its pathway is cofactor biosynthesis; adenosylcobalamin biosynthesis; precorrin-2 from uroporphyrinogen III: step 1/1. It participates in cofactor biosynthesis; adenosylcobalamin biosynthesis; sirohydrochlorin from precorrin-2: step 1/1. It functions in the pathway porphyrin-containing compound metabolism; siroheme biosynthesis; precorrin-2 from uroporphyrinogen III: step 1/1. The protein operates within porphyrin-containing compound metabolism; siroheme biosynthesis; siroheme from sirohydrochlorin: step 1/1. Its pathway is porphyrin-containing compound metabolism; siroheme biosynthesis; sirohydrochlorin from precorrin-2: step 1/1. In terms of biological role, multifunctional enzyme that catalyzes the SAM-dependent methylations of uroporphyrinogen III at position C-2 and C-7 to form precorrin-2 via precorrin-1. Then it catalyzes the NAD-dependent ring dehydrogenation of precorrin-2 to yield sirohydrochlorin. Finally, it catalyzes the ferrochelation of sirohydrochlorin to yield siroheme. This Buchnera aphidicola subsp. Acyrthosiphon pisum (strain APS) (Acyrthosiphon pisum symbiotic bacterium) protein is Siroheme synthase.